The following is a 259-amino-acid chain: Phosphatidate cytidylyltransferase (259 aa).

The next 7 helical transmembrane spans lie at 31–51 (LVIF…CFAI), 69–89 (PLVL…IGLL), 103–123 (FFKS…LIKI), 129–149 (YYLL…YYIG), 170–190 (FLGG…YGIL), 193–213 (FLLG…KSFI), and 236–256 (FDAL…GELN).

This sequence belongs to the CDS family.

The protein localises to the cell membrane. The enzyme catalyses a 1,2-diacyl-sn-glycero-3-phosphate + CTP + H(+) = a CDP-1,2-diacyl-sn-glycerol + diphosphate. It functions in the pathway phospholipid metabolism; CDP-diacylglycerol biosynthesis; CDP-diacylglycerol from sn-glycerol 3-phosphate: step 3/3. This is Phosphatidate cytidylyltransferase (cdsA) from Aquifex aeolicus (strain VF5).